The chain runs to 332 residues: DNA packaging protein (332 aa).

The ATPase stretch occupies residues 1–207; the sequence is MDKSLFYNPQ…SERRKTRFGR (207 aa). ATP is bound at residue 24-31; that stretch reads GARGIGKS. A DNA-binding region spans residues 233 to 332; the sequence is KRSKDSKFVF…YELFRKMRIQ (100 aa).

The protein belongs to the phi29likevirus gp16 family. Homopentamer. Interacts with the packaging RNA (pRNA). Part of a DNA-gp3-gp16 complex.

It carries out the reaction ATP + H2O = ADP + phosphate + H(+). ATPase required for the genome encapsidation reaction. Part of the active packaging motor via the binding to the packaging RNA (pRNA), itself fixed to the head-tail connector at the unique portal vertex of the prohead. Binds and supercoils the pre-formed, unit-length DNA bound to gp3 to produce an initiation complex for DNA packaging. Provides the energy to actively pump the viral DNA into the prohead. Approximately one molecule of ATP is used in the packaging of 2 bp of viral DNA. ATP hydrolysis results in a conformational change that causes the arginine/lysine finger of one subunit to move into the active site of its neighbor, where it interacts with the negatively charged oxygens on the gamma-phosphate of ATP. After packaging, the ATPase and the pRNA are released from the prohead. The polypeptide is DNA packaging protein (16) (Bacillus phage phi29 (Bacteriophage phi-29)).